A 956-amino-acid chain; its full sequence is UvrABC system protein A (956 aa).

An ATP-binding site is contributed by 33–40 (GLSGSGKS). A C4-type zinc finger spans residues 252 to 279 (CPYCGFSVGELEPRMFSFNSPFGACPTC). ABC transporter domains are found at residues 309–587 (WRPI…KNSI) and 607–936 (GNGL…KYLK). Residue 639–646 (GVSGSGKS) coordinates ATP. The C4-type zinc finger occupies 738-764 (CEACKGDGIIKIEMHFLPDVYVPCEVC).

The protein belongs to the ABC transporter superfamily. UvrA family. Forms a heterotetramer with UvrB during the search for lesions.

Its subcellular location is the cytoplasm. Functionally, the UvrABC repair system catalyzes the recognition and processing of DNA lesions. UvrA is an ATPase and a DNA-binding protein. A damage recognition complex composed of 2 UvrA and 2 UvrB subunits scans DNA for abnormalities. When the presence of a lesion has been verified by UvrB, the UvrA molecules dissociate. The protein is UvrABC system protein A of Listeria innocua serovar 6a (strain ATCC BAA-680 / CLIP 11262).